Here is a 327-residue protein sequence, read N- to C-terminus: Ubiquinone biosynthesis O-methyltransferase, mitochondrial (327 aa).

S-adenosyl-L-methionine-binding residues include R79, G142, D165, and F210. Positions 211, 214, and 215 each coordinate Mg(2+).

Belongs to the class I-like SAM-binding methyltransferase superfamily. UbiG/COQ3 family. As to quaternary structure, component of a multi-subunit COQ enzyme complex, composed of at least COQ3, COQ4, COQ5, COQ6, COQ7 and COQ9. Mg(2+) serves as cofactor.

The protein localises to the mitochondrion inner membrane. The catalysed reaction is a 3,4-dihydroxy-5-(all-trans-polyprenyl)benzoate + S-adenosyl-L-methionine = a 4-hydroxy-3-methoxy-5-(all-trans-polyprenyl)benzoate + S-adenosyl-L-homocysteine + H(+). It catalyses the reaction a 3-demethylubiquinone + S-adenosyl-L-methionine = a ubiquinone + S-adenosyl-L-homocysteine. It carries out the reaction a 3-demethylubiquinol + S-adenosyl-L-methionine = a ubiquinol + S-adenosyl-L-homocysteine + H(+). The protein operates within cofactor biosynthesis; ubiquinone biosynthesis. Functionally, O-methyltransferase required for two non-consecutive steps during ubiquinone biosynthesis. Catalyzes the 2 O-methylation of 3,4-dihydroxy-5-(all-trans-polyprenyl)benzoic acid into 4-hydroxy-3-methoxy-5-(all-trans-polyprenyl)benzoic acid. Also catalyzes the last step of ubiquinone biosynthesis by mediating methylation of 3-demethylubiquinone into ubiquinone. Also able to mediate the methylation of 3-demethylubiquinol into ubiquinol. The chain is Ubiquinone biosynthesis O-methyltransferase, mitochondrial from Candida albicans (Yeast).